The sequence spans 416 residues: MKVIVLGAGIIGVTSAYQLSRAGHEVTVIDRQPGPALETSFANAGEVSFGYCSPWAAPGIPMKALKWLFMQHAPLILRPRIDAAMLSWMAKMLSNCTSRRYAVNKSRMLRLADYSRTSLAALREETAITYDERMQGTLQLFRTEAQLDASAKDISALAADGIPYEVLDRDGCIRAEPALGRVRDKIVGGLLTPQDETGDCFKFANALAGRAEKLGVCFDYGTEIRALEVDGGRVHGVVTSKGRRAADAVVVALGSYSPLLVRRFGIRLPVYPVKGYSLTIPIADASRAPVSTVMDETYKIAITRLGDRIRVGGMAEISGYTNDLGIARRRTLEHSVMDLFPGGDAAKGSFWSGLRPMTPDGTPVIGPTRIAGLFLNTGHGTLGWTMSSGSARVIADLVSDRKLEIDATDLAIARYG.

3–17 (VIVLGAGIIGVTSAY) serves as a coordination point for FAD.

This sequence belongs to the DadA oxidoreductase family. FAD is required as a cofactor.

The catalysed reaction is a D-alpha-amino acid + A + H2O = a 2-oxocarboxylate + AH2 + NH4(+). It participates in amino-acid degradation; D-alanine degradation; NH(3) and pyruvate from D-alanine: step 1/1. Functionally, oxidative deamination of D-amino acids. The polypeptide is D-amino acid dehydrogenase (Sinorhizobium medicae (strain WSM419) (Ensifer medicae)).